A 587-amino-acid polypeptide reads, in one-letter code: Lipoprotein LpqB (587 aa).

The N-terminal stretch at 1–19 (MERLMRLTILLFLGAVLAG) is a signal peptide. Residue C20 is the site of N-palmitoyl cysteine attachment. The S-diacylglycerol cysteine moiety is linked to residue C20.

Belongs to the LpqB lipoprotein family.

It localises to the cell membrane. This chain is Lipoprotein LpqB, found in Mycobacterium bovis (strain ATCC BAA-935 / AF2122/97).